Here is a 298-residue protein sequence, read N- to C-terminus: Pyruvate synthase subunit PorB (298 aa).

C19, C22, C47, and C218 together coordinate [4Fe-4S] cluster.

In terms of assembly, heterotetramer of one alpha, one beta, one delta and one gamma chain. [4Fe-4S] cluster serves as cofactor.

It carries out the reaction 2 oxidized [2Fe-2S]-[ferredoxin] + pyruvate + CoA = 2 reduced [2Fe-2S]-[ferredoxin] + acetyl-CoA + CO2 + H(+). The polypeptide is Pyruvate synthase subunit PorB (porB) (Methanocaldococcus jannaschii (strain ATCC 43067 / DSM 2661 / JAL-1 / JCM 10045 / NBRC 100440) (Methanococcus jannaschii)).